A 73-amino-acid polypeptide reads, in one-letter code: Antimicrobial peptide TsAP-1 (73 aa).

A signal peptide spans 1-22 (MQIKHLITLFFLVLIVADQCSA). The residue at position 39 (lysine 39) is a Lysine amide. A propeptide spanning residues 45–73 (EISAQIEQYKDLQKREAELEELLDRLPMY) is cleaved from the precursor.

In terms of tissue distribution, expressed by the venom gland.

The protein resides in the secreted. Its function is as follows. Has a low antimicrobial activity against S.aureus, E.coli, and C.albicans (MICs 120-160 uM). Has a low hemolytic activity (4% at 160 uM). Also inhibits the growth of two cancer cell lines on a total of five (the squamous carcinoma cell line H157 (IC(50)=55.9 uM) and the lung adenocarcinoma cell line H838 (IC(50)=52.5 uM)). This chain is Antimicrobial peptide TsAP-1, found in Tityus serrulatus (Brazilian scorpion).